Consider the following 677-residue polypeptide: DNA gyrase subunit B, novobiocin-resistant (677 aa).

Residues 1 to 23 (MTTYDTRTATDTRGSEQPGHVGT) are disordered. A novobiocin-binding region spans residues 154 to 295 (IWTDGHRWTQ…RLLSAEIALQ (142 aa)). In terms of domain architecture, Toprim spans 456 to 570 (SEIFIVEGDS…EGHVHLSRPP (115 aa)). Mg(2+) contacts are provided by Glu-462, Asp-535, and Asp-537.

The protein belongs to the type II topoisomerase GyrB family. In terms of assembly, heterotetramer, composed of two GyrA and two GyrB chains. In the heterotetramer, GyrA contains the active site tyrosine that forms a transient covalent intermediate with DNA, while GyrB binds cofactors and catalyzes ATP hydrolysis. It depends on Mg(2+) as a cofactor. Mn(2+) is required as a cofactor. The cofactor is Ca(2+).

The protein resides in the cytoplasm. The catalysed reaction is ATP-dependent breakage, passage and rejoining of double-stranded DNA.. Functionally, a type II topoisomerase that negatively supercoils closed circular double-stranded (ds) DNA in an ATP-dependent manner to modulate DNA topology and maintain chromosomes in an underwound state. Negative supercoiling favors strand separation, and DNA replication, transcription, recombination and repair, all of which involve strand separation. Also able to catalyze the interconversion of other topological isomers of dsDNA rings, including catenanes and knotted rings. Type II topoisomerases break and join 2 DNA strands simultaneously in an ATP-dependent manner. In Streptomyces niveus (Streptomyces spheroides), this protein is DNA gyrase subunit B, novobiocin-resistant.